The chain runs to 222 residues: Probable GTP-binding protein EngB (222 aa).

In terms of domain architecture, EngB-type G spans 23–217; that stretch reads NASEIVFLGR…REEIVKYTLG (195 aa). GTP is bound by residues 31–38, 57–61, 82–85, 152–155, and 191–193; these read GRSNVGKS, GKTQL, DLPG, TKAD, and FSA. Mg(2+) contacts are provided by Ser-38 and Thr-59.

This sequence belongs to the TRAFAC class TrmE-Era-EngA-EngB-Septin-like GTPase superfamily. EngB GTPase family. Mg(2+) serves as cofactor.

In terms of biological role, necessary for normal cell division and for the maintenance of normal septation. The sequence is that of Probable GTP-binding protein EngB from Helicobacter hepaticus (strain ATCC 51449 / 3B1).